The sequence spans 292 residues: UDP-N-acetylenolpyruvoylglucosamine reductase (292 aa).

Residues 27–188 (KIGGPVRLFI…LRVGFRIIKG (162 aa)) form the FAD-binding PCMH-type domain. Arg-166 is an active-site residue. Ser-217 serves as the catalytic Proton donor. Glu-288 is a catalytic residue.

It belongs to the MurB family. FAD serves as cofactor.

Its subcellular location is the cytoplasm. It catalyses the reaction UDP-N-acetyl-alpha-D-muramate + NADP(+) = UDP-N-acetyl-3-O-(1-carboxyvinyl)-alpha-D-glucosamine + NADPH + H(+). It participates in cell wall biogenesis; peptidoglycan biosynthesis. Its function is as follows. Cell wall formation. This chain is UDP-N-acetylenolpyruvoylglucosamine reductase, found in Thermosipho melanesiensis (strain DSM 12029 / CIP 104789 / BI429).